Here is a 109-residue protein sequence, read N- to C-terminus: Death-associated protein-like 1 homolog (109 aa).

Disordered regions lie at residues 1–51 and 76–100; these read MVQL…KPRS and FPET…ISRI. Residues 31–50 are compositionally biased toward basic and acidic residues; that stretch reads KSADENANVEKETRKTDKPR.

This sequence belongs to the DAP-DAPL1 family. Associates with ribosomes; preventing translation. Interacts with eiF5a (eif5a and eif5a2); preventing translation.

In terms of biological role, ribosome-binding protein that promotes ribosome hibernation, a process during which ribosomes are stabilized in an inactive state and preserved from proteasomal degradation. Acts via its association with eiF5a (eif5a and eif5a2) at the polypeptide exit tunnel of the ribosome, preventing mRNA translation. Plays a key role in ribosome hibernation in the mature egg by preventing mRNA translation, leading to ribosome inactivation. Ribosomes, which are produced in large quantities during oogenesis, are stored and translationally repressed in the egg and early embryo. This is Death-associated protein-like 1 homolog from Danio rerio (Zebrafish).